A 172-amino-acid chain; its full sequence is Shikimate kinase 2 (172 aa).

9–16 (GARAAGKT) provides a ligand contact to ATP.

It belongs to the shikimate kinase family.

The protein resides in the cytoplasm. It catalyses the reaction shikimate + ATP = 3-phosphoshikimate + ADP + H(+). It functions in the pathway metabolic intermediate biosynthesis; chorismate biosynthesis; chorismate from D-erythrose 4-phosphate and phosphoenolpyruvate: step 5/7. This chain is Shikimate kinase 2, found in Syntrophotalea carbinolica (strain DSM 2380 / NBRC 103641 / GraBd1) (Pelobacter carbinolicus).